The sequence spans 618 residues: Indolepyruvate oxidoreductase subunit IorA (618 aa).

4Fe-4S ferredoxin-type domains are found at residues 558 to 587 (GRPM…VTRE) and 588 to 617 (GEVF…PEGK). C568, C571, C574, C580, C597, C600, C603, and C607 together coordinate [4Fe-4S] cluster.

Heterodimer of the IorA and IorB subunits. Requires [4Fe-4S] cluster as cofactor.

The catalysed reaction is indole-3-pyruvate + 2 oxidized [2Fe-2S]-[ferredoxin] + CoA = (indol-3-yl)acetyl-CoA + 2 reduced [2Fe-2S]-[ferredoxin] + CO2 + H(+). Its function is as follows. Catalyzes the ferredoxin-dependent oxidative decarboxylation of arylpyruvates. The sequence is that of Indolepyruvate oxidoreductase subunit IorA (iorA) from Methanothermobacter thermautotrophicus (strain ATCC 29096 / DSM 1053 / JCM 10044 / NBRC 100330 / Delta H) (Methanobacterium thermoautotrophicum).